Reading from the N-terminus, the 132-residue chain is uncharacterized protein (132 aa).

The chain crosses the membrane as a helical span at residues 105-125 (VHGYVVFWLSILCILIIIFVY).

It is found in the membrane. This is an uncharacterized protein from Methanocaldococcus jannaschii (strain ATCC 43067 / DSM 2661 / JAL-1 / JCM 10045 / NBRC 100440) (Methanococcus jannaschii).